The following is a 417-amino-acid chain: Inhibitor of growth protein 3 (417 aa).

Disordered stretches follow at residues 128–203 (TPSQ…YNTN) and 286–320 (QTLS…SSSS). Basic residues predominate over residues 136–152 (HHAHSHTPVEKRKHNPS). Over residues 156–168 (GATDHVPEKKFKS) the composition is skewed to basic and acidic residues. Low complexity-rich tracts occupy residues 189–203 (NNNS…YNTN), 286–295 (QTLSSSSTDS), and 307–320 (SSSQ…SSSS). The segment at 359–408 (PRYCICNQVSYGEMVGCDNQDCPIEWFHYGCVGLTEAPKGKWYCPQCTAA) adopts a PHD-type zinc-finger fold. 8 residues coordinate Zn(2+): Cys362, Cys364, Cys375, Cys380, His386, Cys389, Cys402, and Cys405.

Belongs to the ING family. Interacts with H3K4me3 and to a lesser extent with H3K4me2. Component of the NuA4 histone acetyltransferase complex.

The protein resides in the nucleus. Its function is as follows. Component of the NuA4 histone acetyltransferase (HAT) complex which is involved in transcriptional activation of select genes principally by acetylation of nucleosomal histone H4 and H2A. This modification may both alter nucleosome - DNA interactions and promote interaction of the modified histones with other proteins which positively regulate transcription. NuA4 may also play a direct role in DNA repair when directly recruited to sites of DNA damage. The sequence is that of Inhibitor of growth protein 3 (ING3) from Gallus gallus (Chicken).